The primary structure comprises 171 residues: Small ribosomal subunit protein uS4 (171 aa).

Residues Arg-104 to Ala-168 enclose the S4 RNA-binding domain.

The protein belongs to the universal ribosomal protein uS4 family. Part of the 30S ribosomal subunit. Contacts protein S5. The interaction surface between S4 and S5 is involved in control of translational fidelity.

Its function is as follows. One of the primary rRNA binding proteins, it binds directly to 16S rRNA where it nucleates assembly of the body of the 30S subunit. Functionally, with S5 and S12 plays an important role in translational accuracy. The protein is Small ribosomal subunit protein uS4 of Aeropyrum pernix (strain ATCC 700893 / DSM 11879 / JCM 9820 / NBRC 100138 / K1).